Here is a 491-residue protein sequence, read N- to C-terminus: Serine/threonine-protein kinase 3/4 (491 aa).

The disordered stretch occupies residues 1–24 (MEEVQRRQHPHPRRSLKKLSEDSL). The segment covering 7–17 (RQHPHPRRSLK) has biased composition (basic residues). In terms of domain architecture, Protein kinase spans 32 to 283 (FDVLEKLGEG…ATQLLQHPFI (252 aa)). ATP is bound by residues 38–46 (LGEGSYGSV) and lysine 61. Residue aspartate 151 is the Proton acceptor of the active site. Threonine 185 carries the post-translational modification Phosphothreonine; by autocatalysis. A coiled-coil region spans residues 292-334 (LRDLITDMMEIKLKRQEEQQRDLDQDDEENSEEDDMDSGTMVR). Disordered stretches follow at residues 307 to 394 (QEEQ…IQQS) and 406 to 435 (EKEN…PQDG). Acidic residues predominate over residues 315-328 (DQDDEENSEEDDMD). 2 stretches are compositionally biased toward polar residues: residues 363–373 (TLDSQMGTMVI) and 410–428 (QANS…SSDN). One can recognise an SARAH domain in the interval 437–484 (FESLKSWSVEELQRRLASLDPTMEQEIEEIRQRYQAKRQPILDAIDAK). Residues 442 to 475 (SWSVEELQRRLASLDPTMEQEIEEIRQRYQAKRQ) adopt a coiled-coil conformation.

The protein belongs to the protein kinase superfamily. STE Ser/Thr protein kinase family. STE20 subfamily. As to quaternary structure, homodimer; mediated via the coiled-coil region. Mg(2+) is required as a cofactor. Proteolytically cleaved by caspase-3 during apoptosis at Asp-328 resulting in a 37 kDa form. Proteolytic cleavage results in kinase activation and nuclear translocation of the truncated form (MST1/N).

The protein localises to the cytoplasm. It localises to the nucleus. It carries out the reaction L-seryl-[protein] + ATP = O-phospho-L-seryl-[protein] + ADP + H(+). It catalyses the reaction L-threonyl-[protein] + ATP = O-phospho-L-threonyl-[protein] + ADP + H(+). Inhibited by the C-terminal non-catalytic region. Activated by caspase-cleavage. Full activation also requires homodimerization and autophosphorylation of Thr-185. In terms of biological role, stress-activated, pro-apoptotic kinase which, following caspase-cleavage, enters the nucleus and induces chromatin condensation followed by internucleosomal DNA fragmentation. Key component of the Hippo signaling pathway which plays a pivotal role in organ size control and tumor suppression by restricting proliferation and promoting apoptosis. The core of this pathway is composed of a kinase cascade wherein stk3/mst2 and stk4/mst1, in complex with its regulatory protein sav1, phosphorylates and activates lats1/2 in complex with its regulatory protein mob1, which in turn phosphorylates and inactivates yap1 oncoprotein and wwtr1/taz. Phosphorylation of yap1 by lats2 inhibits its translocation into the nucleus to regulate cellular genes important for cell proliferation, cell death, and cell migration. Phosphorylates 'Ser-14' of histone H2B (H2BS14ph) during apoptosis. This is Serine/threonine-protein kinase 3/4 (STK4) from Squalus acanthias (Spiny dogfish).